Consider the following 594-residue polypeptide: Phostensin (594 aa).

Basic and acidic residues-rich tracts occupy residues 18 to 33 and 109 to 125; these read EEAA…RDRL and VLGD…ERRS. 2 disordered regions span residues 18 to 238 and 294 to 485; these read EEAA…PTDV and VQDI…GKKR. Phosphoserine is present on residues S126, S134, S174, and S194. Basic and acidic residues-rich tracts occupy residues 133-155 and 167-190; these read QSPK…DRRL and SLRD…EAQK. Residue T198 is modified to Phosphothreonine. S224 bears the Phosphoserine mark. Over residues 353-364 the composition is skewed to acidic residues; sequence EAEEEAEKEEAE. Positions 403-421 are enriched in pro residues; sequence PRPPTPAPLSPPPSAPTAP. S412 is subject to Phosphoserine. K437 bears the N6-acetyllysine mark. S510 bears the Phosphoserine mark. Positions 531 to 577 are disordered; sequence YQYPSESSVLEDLGPEPETPIAPLATQPDEEEEEEEEEEELLLQPGL. Over residues 558-571 the composition is skewed to acidic residues; the sequence is PDEEEEEEEEEEEL.

In terms of assembly, interacts with Protein phosphatase 1 (PP1).

It localises to the cytoplasm. It is found in the cytoskeleton. In terms of biological role, may target protein phosphatase 1 to F-actin cytoskeleton. This chain is Phostensin (Ppp1r18), found in Mus musculus (Mouse).